We begin with the raw amino-acid sequence, 545 residues long: Esterase-5C (545 aa).

Residues 1 to 19 (MLAARLIILLSFYWLSASA) form the signal peptide. An intrachain disulfide couples C84 to C103. The N-linked (GlcNAc...) asparagine glycan is linked to N113. Catalysis depends on S207, which acts as the Acyl-ester intermediate. Cysteines 259 and 271 form a disulfide. An N-linked (GlcNAc...) asparagine glycan is attached at N421. Residue H467 is the Charge relay system of the active site. N-linked (GlcNAc...) asparagine glycosylation is present at N507. C515 and C536 form a disulfide bridge.

Belongs to the type-B carboxylesterase/lipase family.

It is found in the secreted. It carries out the reaction a carboxylic ester + H2O = an alcohol + a carboxylate + H(+). This Drosophila pseudoobscura pseudoobscura (Fruit fly) protein is Esterase-5C (Est-5C).